The primary structure comprises 483 residues: Glutamyl-tRNA(Gln) amidotransferase subunit A (483 aa).

Residues K76 and S151 each act as charge relay system in the active site. Catalysis depends on S175, which acts as the Acyl-ester intermediate.

It belongs to the amidase family. GatA subfamily. In terms of assembly, heterotrimer of A, B and C subunits.

The catalysed reaction is L-glutamyl-tRNA(Gln) + L-glutamine + ATP + H2O = L-glutaminyl-tRNA(Gln) + L-glutamate + ADP + phosphate + H(+). Allows the formation of correctly charged Gln-tRNA(Gln) through the transamidation of misacylated Glu-tRNA(Gln) in organisms which lack glutaminyl-tRNA synthetase. The reaction takes place in the presence of glutamine and ATP through an activated gamma-phospho-Glu-tRNA(Gln). This Ectopseudomonas mendocina (strain ymp) (Pseudomonas mendocina) protein is Glutamyl-tRNA(Gln) amidotransferase subunit A.